The chain runs to 284 residues: NH(3)-dependent NAD(+) synthetase (284 aa).

Residue 51 to 58 (GISGGIDS) participates in ATP binding. D57 contributes to the Mg(2+) binding site. R148 lines the deamido-NAD(+) pocket. T168 provides a ligand contact to ATP. Mg(2+) is bound at residue E173. The deamido-NAD(+) site is built by K181 and D188. ATP-binding residues include K197 and T219. Deamido-NAD(+) is bound at residue 268-269 (HK).

The protein belongs to the NAD synthetase family. As to quaternary structure, homodimer.

It catalyses the reaction deamido-NAD(+) + NH4(+) + ATP = AMP + diphosphate + NAD(+) + H(+). The protein operates within cofactor biosynthesis; NAD(+) biosynthesis; NAD(+) from deamido-NAD(+) (ammonia route): step 1/1. In terms of biological role, catalyzes the ATP-dependent amidation of deamido-NAD to form NAD. Uses ammonia as a nitrogen source. In Burkholderia pseudomallei (strain 1106a), this protein is NH(3)-dependent NAD(+) synthetase.